The following is a 404-amino-acid chain: Ubiquitin-like modifier-activating enzyme 5 (404 aa).

A Phosphoserine modification is found at Ser45. ATP is bound by residues Gly83, Asp104, Lys127, Asn150, and Asn184. Positions 226 and 229 each coordinate Zn(2+). Catalysis depends on Cys250, which acts as the Glycyl thioester intermediate. Zn(2+) is bound by residues Cys303 and Cys308. A UFM1-interacting sequence (UIS) motif is present at residues 334-346 (IIHEDNEWGIELV). Positions 347-377 (SEVSEEELKNFSGPVPDLPEGITVAYTIPKK) are linker. A phosphoserine mark is found at Ser358 and Ser393. The short motif at 389–404 (DSGESLEDLMAKMKNM) is the UFC1-binding sequence (UFC) element.

Belongs to the ubiquitin-activating E1 family. UBA5 subfamily. Homodimer; homodimerization is required for UFM1 activation. Interacts (via UIS motif) with UFM1; binds UFM1 via a trans-binding mechanism in which UFM1 interacts with distinct sites in both subunits of the UBA5 homodimer. Interacts (via C-terminus) with UFC1. Interacts (via UIS motif) with GABARAPL2 and, with lower affinity, with GABARAP and GABARAPL1. Widely expressed.

Its subcellular location is the cytoplasm. It is found in the nucleus. It localises to the endoplasmic reticulum membrane. The protein localises to the golgi apparatus. Its function is as follows. E1-like enzyme which specifically catalyzes the first step in ufmylation. Activates UFM1 by first adenylating its C-terminal glycine residue with ATP, and thereafter linking this residue to the side chain of a cysteine residue in E1, yielding a UFM1-E1 thioester and free AMP. Activates UFM1 via a trans-binding mechanism, in which UFM1 interacts with distinct sites in both subunits of the UBA5 homodimer. Trans-binding also promotes stabilization of the UBA5 homodimer, and enhances ATP-binding. Transfer of UFM1 from UBA5 to the E2-like enzyme UFC1 also takes place using a trans mechanism. Ufmylation plays a key role in various processes, such as ribosome recycling, response to DNA damage, interferon response or reticulophagy (also called ER-phagy). Ufmylation is essential for erythroid differentiation of both megakaryocytes and erythrocytes. This Homo sapiens (Human) protein is Ubiquitin-like modifier-activating enzyme 5.